Consider the following 476-residue polypeptide: Glutamyl-tRNA(Gln) amidotransferase subunit A (476 aa).

Catalysis depends on charge relay system residues K69 and S144. Residue S168 is the Acyl-ester intermediate of the active site.

It belongs to the amidase family. GatA subfamily. In terms of assembly, heterotrimer of A, B and C subunits.

It carries out the reaction L-glutamyl-tRNA(Gln) + L-glutamine + ATP + H2O = L-glutaminyl-tRNA(Gln) + L-glutamate + ADP + phosphate + H(+). Allows the formation of correctly charged Gln-tRNA(Gln) through the transamidation of misacylated Glu-tRNA(Gln) in organisms which lack glutaminyl-tRNA synthetase. The reaction takes place in the presence of glutamine and ATP through an activated gamma-phospho-Glu-tRNA(Gln). This chain is Glutamyl-tRNA(Gln) amidotransferase subunit A, found in Sulfolobus acidocaldarius (strain ATCC 33909 / DSM 639 / JCM 8929 / NBRC 15157 / NCIMB 11770).